Consider the following 522-residue polypeptide: Glucans biosynthesis protein G (522 aa).

Residues 1-33 form the signal peptide; sequence MLDNKFGFKQRVASLRWLSAAIMLSVSAVPAWA.

Belongs to the OpgD/OpgG family.

Its subcellular location is the periplasm. It participates in glycan metabolism; osmoregulated periplasmic glucan (OPG) biosynthesis. Functionally, involved in the biosynthesis of osmoregulated periplasmic glucans (OPGs). In Pectobacterium atrosepticum (strain SCRI 1043 / ATCC BAA-672) (Erwinia carotovora subsp. atroseptica), this protein is Glucans biosynthesis protein G.